The primary structure comprises 436 residues: 3-ketoacyl-CoA thiolase (436 aa).

C99 serves as the catalytic Acyl-thioester intermediate. Active-site proton acceptor residues include H392 and C422.

This sequence belongs to the thiolase-like superfamily. Thiolase family. Heterotetramer of two alpha chains (FadJ) and two beta chains (FadI).

Its subcellular location is the cytoplasm. The catalysed reaction is an acyl-CoA + acetyl-CoA = a 3-oxoacyl-CoA + CoA. The protein operates within lipid metabolism; fatty acid beta-oxidation. Catalyzes the final step of fatty acid oxidation in which acetyl-CoA is released and the CoA ester of a fatty acid two carbons shorter is formed. This chain is 3-ketoacyl-CoA thiolase, found in Pseudoalteromonas translucida (strain TAC 125).